Consider the following 322-residue polypeptide: tRNA dimethylallyltransferase (322 aa).

19-26 contacts ATP; it reads GPTASGKT. 21-26 is a binding site for substrate; sequence TASGKT. 3 interaction with substrate tRNA regions span residues 44–47, 168–172, and 255–260; these read DSAL, QRIQR, and RCVGYR.

The protein belongs to the IPP transferase family. As to quaternary structure, monomer. The cofactor is Mg(2+).

It catalyses the reaction adenosine(37) in tRNA + dimethylallyl diphosphate = N(6)-dimethylallyladenosine(37) in tRNA + diphosphate. Catalyzes the transfer of a dimethylallyl group onto the adenine at position 37 in tRNAs that read codons beginning with uridine, leading to the formation of N6-(dimethylallyl)adenosine (i(6)A). The chain is tRNA dimethylallyltransferase from Cupriavidus necator (strain ATCC 17699 / DSM 428 / KCTC 22496 / NCIMB 10442 / H16 / Stanier 337) (Ralstonia eutropha).